The following is a 257-amino-acid chain: Enterotoxin type A (257 aa).

Positions 1 to 27 are cleaved as a signal peptide; sequence MKKTAFILLLFIALTWTTSPLVNGSEK. The cysteines at positions 120 and 130 are disulfide-linked. H211, H249, and D251 together coordinate Zn(2+).

The protein belongs to the staphylococcal/streptococcal toxin family. Monomer. Interacts with MHC class II molecules alpha/HLA-DRB1 and beta/HLA-DRA chains. The interaction with MHC-II molecules occurs at both zinc-dependent and zinc-independent sites. Interacts with T-cell receptor beta variable 7-9/TRBV7-9. Zn(2+) is required as a cofactor.

Its subcellular location is the secreted. Staphylococcal enterotoxin that activates the host immune system by binding as unprocessed molecules to major histocompatibility (MHC) complex class II and T-cell receptor (TCR) molecules. In turn, waves of cellular activation, cytokine production, and migration into the lung tissue and airways occur via alphabeta T-cells. Also causes the intoxication staphylococcal food poisoning syndrome. The illness is characterized by high fever, hypotension, diarrhea, shock, and in some cases death. The chain is Enterotoxin type A (sea) from Staphylococcus aureus (strain Newman).